Consider the following 83-residue polypeptide: Large ribosomal subunit protein bL27 (83 aa).

Positions 1 to 20 (MAHKKGASSSRNGRDSNPQY) are disordered. Polar residues predominate over residues 7-19 (ASSSRNGRDSNPQ).

The protein belongs to the bacterial ribosomal protein bL27 family.

The chain is Large ribosomal subunit protein bL27 from Bifidobacterium animalis subsp. lactis (strain AD011).